A 103-amino-acid chain; its full sequence is Small ribosomal subunit protein uS10 (103 aa).

Belongs to the universal ribosomal protein uS10 family. Part of the 30S ribosomal subunit.

Involved in the binding of tRNA to the ribosomes. The sequence is that of Small ribosomal subunit protein uS10 from Shewanella amazonensis (strain ATCC BAA-1098 / SB2B).